Here is an 868-residue protein sequence, read N- to C-terminus: Leucine--tRNA ligase (868 aa).

The short motif at 42–52 (PYPSGKLHMGH) is the 'HIGH' region element. The short motif at 627-631 (KMAKS) is the 'KMSKS' region element. Lys-630 serves as a coordination point for ATP.

Belongs to the class-I aminoacyl-tRNA synthetase family.

The protein resides in the cytoplasm. It carries out the reaction tRNA(Leu) + L-leucine + ATP = L-leucyl-tRNA(Leu) + AMP + diphosphate. The polypeptide is Leucine--tRNA ligase (Pseudomonas fluorescens (strain ATCC BAA-477 / NRRL B-23932 / Pf-5)).